Here is a 336-residue protein sequence, read N- to C-terminus: Putative ataxin-3 homolog (336 aa).

The region spanning 10 to 193 is the Josephin domain; the sequence is GGLLYHEVQE…KECPMATEGS (184 aa). Cysteine 23 acts as the Nucleophile in catalysis. Histidine 132 acts as the Proton acceptor in catalysis. Residue asparagine 147 is part of the active site. Residues 244–263 form the UIM domain; sequence QEEADLNAAIAASLMDTGGP. The disordered stretch occupies residues 281 to 336; sequence IESTSGEMSKDGNLEEQGANKSETSEPNSDNIESASGSNPKQNTTSLEGKESIKED. Positions 299 to 327 are enriched in polar residues; sequence ANKSETSEPNSDNIESASGSNPKQNTTSL.

It is found in the nucleus. It carries out the reaction Thiol-dependent hydrolysis of ester, thioester, amide, peptide and isopeptide bonds formed by the C-terminal Gly of ubiquitin (a 76-residue protein attached to proteins as an intracellular targeting signal).. Functionally, interacts with key regulators of transcription and represses transcription. Acts as a histone-binding protein that regulates transcription. Acts as a deubiquitinating enzyme. This Oryza sativa subsp. japonica (Rice) protein is Putative ataxin-3 homolog.